The sequence spans 213 residues: Glycerol-3-phosphate acyltransferase (213 aa).

6 consecutive transmembrane segments (helical) span residues 3–23 (ILLL…LWIG), 54–76 (TITF…WLGI), 83–100 (IIGF…FTGF), 110–130 (AGVL…VFAL), 142–162 (SITA…IHFL), and 163–183 (LDGY…VIIF).

This sequence belongs to the PlsY family. In terms of assembly, probably interacts with PlsX.

The protein resides in the cell membrane. It catalyses the reaction an acyl phosphate + sn-glycerol 3-phosphate = a 1-acyl-sn-glycero-3-phosphate + phosphate. The protein operates within lipid metabolism; phospholipid metabolism. In terms of biological role, catalyzes the transfer of an acyl group from acyl-phosphate (acyl-PO(4)) to glycerol-3-phosphate (G3P) to form lysophosphatidic acid (LPA). This enzyme utilizes acyl-phosphate as fatty acyl donor, but not acyl-CoA or acyl-ACP. The chain is Glycerol-3-phosphate acyltransferase from Streptococcus thermophilus (strain ATCC BAA-491 / LMD-9).